The chain runs to 242 residues: DNA repair protein RecO (242 aa).

Belongs to the RecO family. Monomer.

Its function is as follows. Involved in DNA repair and RecF pathway recombination. The polypeptide is DNA repair protein RecO (Salmonella agona (strain SL483)).